We begin with the raw amino-acid sequence, 214 residues long: Dimethylamine corrinoid protein 2 (214 aa).

Residues 1–91 (MATKEELIQE…DMPAGAATKK (91 aa)) enclose the B12-binding N-terminal domain. The 123-residue stretch at 92 to 214 (LGVIVNGTVE…AVAKAKELLL (123 aa)) folds into the B12-binding domain. His105 contributes to the methylcob(III)alamin binding site.

The protein belongs to the methylamine corrinoid protein family.

It participates in one-carbon metabolism; methanogenesis from dimethylamine. Its function is as follows. Acts as a methyl group carrier between MtbB and MtbA. The polypeptide is Dimethylamine corrinoid protein 2 (mtbC2) (Methanosarcina mazei (strain ATCC BAA-159 / DSM 3647 / Goe1 / Go1 / JCM 11833 / OCM 88) (Methanosarcina frisia)).